Reading from the N-terminus, the 62-residue chain is Protein DsrB (62 aa).

It belongs to the DsrB family.

The protein is Protein DsrB of Shigella boydii serotype 18 (strain CDC 3083-94 / BS512).